We begin with the raw amino-acid sequence, 839 residues long: Protein translocase subunit SecA (839 aa).

Residues Gln-85, 103 to 107 (GEGKT), and Asp-493 contribute to the ATP site. The span at 780–790 (QIHEQERERAS) shows a compositional bias: basic and acidic residues. The disordered stretch occupies residues 780–839 (QIHEQERERASQRATTAAPQNIQSQQSANTDDLPKVERNEACPCGSGKKFKNCHGRKSFS). Residues 791 to 809 (QRATTAAPQNIQSQQSANT) are compositionally biased toward polar residues. The Zn(2+) site is built by Cys-821, Cys-823, Cys-832, and His-833. A compositionally biased stretch (basic residues) spans 827–839 (KKFKNCHGRKSFS).

Belongs to the SecA family. As to quaternary structure, monomer and homodimer. Part of the essential Sec protein translocation apparatus which comprises SecA, SecYEG and auxiliary proteins SecDF. Other proteins may also be involved. It depends on Zn(2+) as a cofactor.

It localises to the cell membrane. It is found in the cytoplasm. It catalyses the reaction ATP + H2O + cellular proteinSide 1 = ADP + phosphate + cellular proteinSide 2.. Part of the Sec protein translocase complex. Interacts with the SecYEG preprotein conducting channel. Has a central role in coupling the hydrolysis of ATP to the transfer of proteins into and across the cell membrane, serving as an ATP-driven molecular motor driving the stepwise translocation of polypeptide chains across the membrane. In Streptococcus pyogenes serotype M1, this protein is Protein translocase subunit SecA.